Consider the following 337-residue polypeptide: 5-formaminoimidazole-4-carboxamide-1-(beta)-D-ribofuranosyl 5'-monophosphate synthetase (337 aa).

Residues histidine 14 and serine 74 each coordinate 5-amino-1-(5-phospho-beta-D-ribosyl)imidazole-4-carboxamide. The ATP-grasp domain occupies 81-328; sequence VELVERMKVP…IAREIRLAIE (248 aa). Residues 125 to 185 and glutamate 207 contribute to the ATP site; that span reads PDDI…VPVY. A 5-amino-1-(5-phospho-beta-D-ribosyl)imidazole-4-carboxamide-binding site is contributed by asparagine 235. Residues glutamate 273 and glutamate 286 each contribute to the Mg(2+) site.

This sequence belongs to the phosphohexose mutase family. Mg(2+) is required as a cofactor. It depends on Mn(2+) as a cofactor.

The enzyme catalyses 5-amino-1-(5-phospho-beta-D-ribosyl)imidazole-4-carboxamide + formate + ATP = 5-formamido-1-(5-phospho-D-ribosyl)imidazole-4-carboxamide + ADP + phosphate. The protein operates within purine metabolism; IMP biosynthesis via de novo pathway; 5-formamido-1-(5-phospho-D-ribosyl)imidazole-4-carboxamide from 5-amino-1-(5-phospho-D-ribosyl)imidazole-4-carboxamide (formate route): step 1/1. Functionally, catalyzes the ATP- and formate-dependent formylation of 5-aminoimidazole-4-carboxamide-1-beta-d-ribofuranosyl 5'-monophosphate (AICAR) to 5-formaminoimidazole-4-carboxamide-1-beta-d-ribofuranosyl 5'-monophosphate (FAICAR) in the absence of folates. In Pyrococcus abyssi (strain GE5 / Orsay), this protein is 5-formaminoimidazole-4-carboxamide-1-(beta)-D-ribofuranosyl 5'-monophosphate synthetase.